The chain runs to 141 residues: Succinate dehydrogenase [ubiquinone] cytochrome b small subunit 2 (141 aa).

The transit peptide at 1–24 (MSLIRCTTSKALKFRQLLKMAART) directs the protein to the mitochondrion. Residues 25 to 44 (SVTTPVSREPFSIEDHSLHF) are Mitochondrial matrix-facing. Residues 45 to 63 (KIERYWAAGMIPLIPTAYF) traverse the membrane as a helical segment. Residues 64–68 (IHTPA) are Mitochondrial intermembrane-facing. A helical membrane pass occupies residues 69 to 89 (MDAVLTVAIVLHVHWGIAGVV). His-80 provides a ligand contact to heme b. Residues 90–104 (SDYARPFVIGDTLAR) lie on the Mitochondrial matrix side of the membrane. Tyr-92 serves as a coordination point for a ubiquinone. A helical membrane pass occupies residues 105 to 126 (VARASVYIITVILLASLLHFNN). Residues 127 to 141 (SDVGLTKAFEMVWSL) are Mitochondrial intermembrane-facing.

Belongs to the CybS family. Component of the mitochondrial electron transport chain complex II composed of four subunits: a flavoprotein (Fp), an iron-sulfur protein (Ip), and a large cytochrome b (CybL) subunit and a small cytochrome b (CybS) subunit. There are 2 developmental stage-specific forms of complex II which have the Ip and CybL subunits in common. Complex II from the free-living larvae (aerobic environment) acts as a succinate dehydrogenase and is composed of the common subunit Ip and CybL and the stage specific subunits FpL and CybSL. Complex II from parasitic larvae and adults (anaerobic environment) acts as a fumarate reductase and is composed of the common subunit Ip and CybL and the stage specific subunits FpA and CybSA. Heme b serves as cofactor.

The protein localises to the mitochondrion inner membrane. The protein operates within carbohydrate metabolism; tricarboxylic acid cycle; fumarate from succinate (eukaryal route): step 1/1. Membrane-bound small subunit (CybS) of the mitochondrial electron transport chain complex II, which together with the membrane-bound large subunit (CybL), anchor the catalytic subunits to the inner mitochondria membrane. During the free-living egg-larvae stages, which occur in an aerobic environment, complex II acts as a succinate dehydrogenase by transferring electrons from succinate to ubiquinone. The polypeptide is Succinate dehydrogenase [ubiquinone] cytochrome b small subunit 2 (Ascaris suum (Pig roundworm)).